The sequence spans 200 residues: Pyridoxal 5'-phosphate synthase subunit PdxT (200 aa).

52–54 (GES) contributes to the L-glutamine binding site. Cys84 acts as the Nucleophile in catalysis. L-glutamine contacts are provided by residues Arg116 and 145–146 (IR). Active-site charge relay system residues include His181 and Glu183.

This sequence belongs to the glutaminase PdxT/SNO family. In the presence of PdxS, forms a dodecamer of heterodimers. Only shows activity in the heterodimer.

It carries out the reaction aldehydo-D-ribose 5-phosphate + D-glyceraldehyde 3-phosphate + L-glutamine = pyridoxal 5'-phosphate + L-glutamate + phosphate + 3 H2O + H(+). The enzyme catalyses L-glutamine + H2O = L-glutamate + NH4(+). It functions in the pathway cofactor biosynthesis; pyridoxal 5'-phosphate biosynthesis. Functionally, catalyzes the hydrolysis of glutamine to glutamate and ammonia as part of the biosynthesis of pyridoxal 5'-phosphate. The resulting ammonia molecule is channeled to the active site of PdxS. The polypeptide is Pyridoxal 5'-phosphate synthase subunit PdxT (Saccharolobus islandicus (strain M.16.27) (Sulfolobus islandicus)).